Here is a 161-residue protein sequence, read N- to C-terminus: Ribosome maturation factor RimP (161 aa).

Belongs to the RimP family.

The protein localises to the cytoplasm. Functionally, required for maturation of 30S ribosomal subunits. This chain is Ribosome maturation factor RimP, found in Rickettsia rickettsii (strain Iowa).